We begin with the raw amino-acid sequence, 490 residues long: Cyclin-A2-1 (490 aa).

Residues 34 to 76 (FAPSVSLPARTERKQTAKGKTKRGALDEITSASTATSAPQPKR) are disordered. Over residues 63-72 (TSASTATSAP) the composition is skewed to polar residues.

Belongs to the cyclin family. Cyclin AB subfamily.

The chain is Cyclin-A2-1 (CYCA2-1) from Oryza sativa subsp. japonica (Rice).